Reading from the N-terminus, the 93-residue chain is DNA-directed RNA polymerase subunit omega (93 aa).

The protein belongs to the RNA polymerase subunit omega family. In terms of assembly, the RNAP catalytic core consists of 2 alpha, 1 beta, 1 beta' and 1 omega subunit. When a sigma factor is associated with the core the holoenzyme is formed, which can initiate transcription.

It catalyses the reaction RNA(n) + a ribonucleoside 5'-triphosphate = RNA(n+1) + diphosphate. Its function is as follows. Promotes RNA polymerase assembly. Latches the N- and C-terminal regions of the beta' subunit thereby facilitating its interaction with the beta and alpha subunits. The polypeptide is DNA-directed RNA polymerase subunit omega (Shewanella piezotolerans (strain WP3 / JCM 13877)).